Consider the following 171-residue polypeptide: ATP synthase subunit b (171 aa).

The helical transmembrane segment at 10 to 30 (GLYYGDSIFYAVCFLLLMWII) threads the bilayer.

The protein belongs to the ATPase B chain family. As to quaternary structure, F-type ATPases have 2 components, F(1) - the catalytic core - and F(0) - the membrane proton channel. F(1) has five subunits: alpha(3), beta(3), gamma(1), delta(1), epsilon(1). F(0) has three main subunits: a(1), b(2) and c(10-14). The alpha and beta chains form an alternating ring which encloses part of the gamma chain. F(1) is attached to F(0) by a central stalk formed by the gamma and epsilon chains, while a peripheral stalk is formed by the delta and b chains.

It is found in the cell membrane. F(1)F(0) ATP synthase produces ATP from ADP in the presence of a proton or sodium gradient. F-type ATPases consist of two structural domains, F(1) containing the extramembraneous catalytic core and F(0) containing the membrane proton channel, linked together by a central stalk and a peripheral stalk. During catalysis, ATP synthesis in the catalytic domain of F(1) is coupled via a rotary mechanism of the central stalk subunits to proton translocation. In terms of biological role, component of the F(0) channel, it forms part of the peripheral stalk, linking F(1) to F(0). This chain is ATP synthase subunit b, found in Levilactobacillus brevis (strain ATCC 367 / BCRC 12310 / CIP 105137 / JCM 1170 / LMG 11437 / NCIMB 947 / NCTC 947) (Lactobacillus brevis).